The primary structure comprises 251 residues: Octanoyltransferase (251 aa).

The region spanning 49–230 is the BPL/LPL catalytic domain; sequence DEIPDQLLIL…ALDDALAGRL (182 aa). Substrate is bound by residues 87–94, 160–162, and 173–175; these read RGGRITWH, AIG, and GVA. Cysteine 191 serves as the catalytic Acyl-thioester intermediate.

It belongs to the LipB family.

The protein resides in the cytoplasm. The catalysed reaction is octanoyl-[ACP] + L-lysyl-[protein] = N(6)-octanoyl-L-lysyl-[protein] + holo-[ACP] + H(+). Its pathway is protein modification; protein lipoylation via endogenous pathway; protein N(6)-(lipoyl)lysine from octanoyl-[acyl-carrier-protein]: step 1/2. Its function is as follows. Catalyzes the transfer of endogenously produced octanoic acid from octanoyl-acyl-carrier-protein onto the lipoyl domains of lipoate-dependent enzymes. Lipoyl-ACP can also act as a substrate although octanoyl-ACP is likely to be the physiological substrate. The polypeptide is Octanoyltransferase (Corynebacterium glutamicum (strain R)).